Here is a 699-residue protein sequence, read N- to C-terminus: Elongation factor G (699 aa).

The tr-type G domain maps to 8-283 (EHIRNIGICA…AVVDFLPSPI (276 aa)). Residues 17–24 (AHIDAGKT), 81–85 (DTPGH), and 135–138 (NKMD) contribute to the GTP site.

This sequence belongs to the TRAFAC class translation factor GTPase superfamily. Classic translation factor GTPase family. EF-G/EF-2 subfamily.

The protein localises to the cytoplasm. In terms of biological role, catalyzes the GTP-dependent ribosomal translocation step during translation elongation. During this step, the ribosome changes from the pre-translocational (PRE) to the post-translocational (POST) state as the newly formed A-site-bound peptidyl-tRNA and P-site-bound deacylated tRNA move to the P and E sites, respectively. Catalyzes the coordinated movement of the two tRNA molecules, the mRNA and conformational changes in the ribosome. This Rickettsia helvetica protein is Elongation factor G.